Reading from the N-terminus, the 267-residue chain is Undecaprenyl-diphosphatase (267 aa).

The next 7 helical transmembrane spans lie at 4-24 (LYAL…ISST), 41-61 (FWKS…IFVF), 69-89 (LDIW…GLFV), 96-116 (LFNG…FILI), 173-193 (AAEF…AYSI), 207-227 (IPLG…IKFF), and 239-259 (FGIY…SGIL).

Belongs to the UppP family.

It is found in the cell inner membrane. It catalyses the reaction di-trans,octa-cis-undecaprenyl diphosphate + H2O = di-trans,octa-cis-undecaprenyl phosphate + phosphate + H(+). In terms of biological role, catalyzes the dephosphorylation of undecaprenyl diphosphate (UPP). Confers resistance to bacitracin. This chain is Undecaprenyl-diphosphatase, found in Campylobacter jejuni subsp. jejuni serotype O:2 (strain ATCC 700819 / NCTC 11168).